The primary structure comprises 489 residues: Mitochondrial-processing peptidase subunit beta (489 aa).

Residues 1–45 (MAAAALSRTLLPEARRRLWGFTRRLPLRRAAAQPLYFGGDRLRST) constitute a mitochondrion transit peptide. His-101 is a binding site for Zn(2+). Catalysis depends on Glu-104, which acts as the Proton acceptor. His-105 and Glu-181 together coordinate Zn(2+).

This sequence belongs to the peptidase M16 family. Heterodimer of PMPCA (alpha) and PMPCB (beta) subunits, forming the mitochondrial processing protease (MPP) in which PMPCA is involved in substrate recognition and binding and PMPCB is the catalytic subunit. Zn(2+) is required as a cofactor.

It localises to the mitochondrion matrix. The catalysed reaction is Release of N-terminal transit peptides from precursor proteins imported into the mitochondrion, typically with Arg in position P2.. Its activity is regulated as follows. Binding to PMPCA is required for catalytic activity. Functionally, catalytic subunit of the essential mitochondrial processing protease (MPP), which cleaves the mitochondrial sequence off newly imported precursors proteins. Preferentially, cleaves after an arginine at position P2. Required for PINK1 turnover by coupling PINK1 mitochondrial import and cleavage, which results in subsequent PINK1 proteolysis. The chain is Mitochondrial-processing peptidase subunit beta (Pmpcb) from Mus musculus (Mouse).